We begin with the raw amino-acid sequence, 101 residues long: Small ribosomal subunit protein uS14 (101 aa).

This sequence belongs to the universal ribosomal protein uS14 family. Part of the 30S ribosomal subunit. Contacts proteins S3 and S10.

Functionally, binds 16S rRNA, required for the assembly of 30S particles and may also be responsible for determining the conformation of the 16S rRNA at the A site. This chain is Small ribosomal subunit protein uS14, found in Bartonella bacilliformis (strain ATCC 35685 / KC583 / Herrer 020/F12,63).